The sequence spans 410 residues: Peptidase T (410 aa).

Histidine 78 is a binding site for Zn(2+). Aspartate 80 is an active-site residue. Zn(2+) is bound at residue aspartate 140. Residue glutamate 174 is the Proton acceptor of the active site. Zn(2+) contacts are provided by glutamate 175, aspartate 197, and histidine 379.

The protein belongs to the peptidase M20B family. The cofactor is Zn(2+).

It is found in the cytoplasm. The enzyme catalyses Release of the N-terminal residue from a tripeptide.. In terms of biological role, cleaves the N-terminal amino acid of tripeptides. This chain is Peptidase T, found in Staphylococcus saprophyticus subsp. saprophyticus (strain ATCC 15305 / DSM 20229 / NCIMB 8711 / NCTC 7292 / S-41).